We begin with the raw amino-acid sequence, 503 residues long: Arabinose import ATP-binding protein AraG 1 (503 aa).

2 consecutive ABC transporter domains span residues L5 to R240 and R251 to T497. G37–S44 serves as a coordination point for ATP.

This sequence belongs to the ABC transporter superfamily. Arabinose importer (TC 3.A.1.2.2) family. As to quaternary structure, the complex is composed of two ATP-binding proteins (AraG), two transmembrane proteins (AraH) and a solute-binding protein (AraF).

It is found in the cell inner membrane. The enzyme catalyses L-arabinose(out) + ATP + H2O = L-arabinose(in) + ADP + phosphate + H(+). Functionally, part of the ABC transporter complex AraFGH involved in arabinose import. Responsible for energy coupling to the transport system. This Burkholderia ambifaria (strain ATCC BAA-244 / DSM 16087 / CCUG 44356 / LMG 19182 / AMMD) (Burkholderia cepacia (strain AMMD)) protein is Arabinose import ATP-binding protein AraG 1.